A 121-amino-acid polypeptide reads, in one-letter code: Large ribosomal subunit protein eL31 (121 aa).

This sequence belongs to the eukaryotic ribosomal protein eL31 family.

This Perilla frutescens (Beefsteak mint) protein is Large ribosomal subunit protein eL31 (RPL31).